The primary structure comprises 149 residues: UPF0102 protein Bpro_0391 (149 aa).

The segment at 1–30 (MWFSRKQVVKPPPDGSRAQPGQVTTKSRGD) is disordered.

This sequence belongs to the UPF0102 family.

The chain is UPF0102 protein Bpro_0391 from Polaromonas sp. (strain JS666 / ATCC BAA-500).